Consider the following 181-residue polypeptide: Histone deacetylase complex subunit SAP30L-A (181 aa).

Cystine bridges form between C26/C27 and C35/C71. The Atypical zinc-finger motif lies at 26-74 (CCLIDGGERCPRPAGNASFSKRVQKSISQKKLKLDIDKNVRHLYICDFH). The interval 82–103 (RNKRKRKTSDDGGDSPEHETDI) is disordered. The Nuclear localization signal (NLS) signature appears at 83-88 (NKRKRK). Residues 85 to 87 (RKR) are important for DNA and phosphoinositide binding.

The protein belongs to the SAP30 family. Interacts with components of the histone deacetylase complex sin3a, hdac1 and hdac2. Binds histones and nucleosomes.

It is found in the nucleus. The protein localises to the nucleolus. Functions as a transcription repressor, probably via its interaction with histone deacetylase complexes. Involved in the functional recruitment of the class 1 Sin3-histone deacetylase complex (HDAC) to the nucleolus. Binds DNA, apparently without sequence-specificity, and bends bound double-stranded DNA. Binds phosphoinositol phosphates (phosphoinositol 3-phosphate, phosphoinositol 4-phosphate and phosphoinositol 5-phosphate) via the same basic sequence motif that mediates DNA binding and nuclear import. This chain is Histone deacetylase complex subunit SAP30L-A (sap30l-a), found in Xenopus laevis (African clawed frog).